The chain runs to 59 residues: Large ribosomal subunit protein bL32 (59 aa).

This sequence belongs to the bacterial ribosomal protein bL32 family.

This chain is Large ribosomal subunit protein bL32, found in Polynucleobacter necessarius subsp. necessarius (strain STIR1).